The sequence spans 278 residues: Large ribosomal subunit protein uL2 (278 aa).

Composition is skewed to basic residues over residues 210–219 (RSRWLGKRPQ) and 252–263 (KKSRGIKTRNSK). The tract at residues 210-278 (RSRWLGKRPQ…LIIRHRKGNK (69 aa)) is disordered.

Belongs to the universal ribosomal protein uL2 family. As to quaternary structure, part of the 50S ribosomal subunit. Forms a bridge to the 30S subunit in the 70S ribosome.

One of the primary rRNA binding proteins. Required for association of the 30S and 50S subunits to form the 70S ribosome, for tRNA binding and peptide bond formation. It has been suggested to have peptidyltransferase activity; this is somewhat controversial. Makes several contacts with the 16S rRNA in the 70S ribosome. This chain is Large ribosomal subunit protein uL2, found in Lactobacillus johnsonii (strain CNCM I-12250 / La1 / NCC 533).